The chain runs to 215 residues: Proteasome subunit beta (215 aa).

The propeptide at 1-12 (MLGEIQDKVYKG) is removed in mature form; by autocatalysis. Residue Thr-13 is the Nucleophile of the active site.

It belongs to the peptidase T1B family. The 20S proteasome core is composed of 14 alpha and 14 beta subunits that assemble into four stacked heptameric rings, resulting in a barrel-shaped structure. The two inner rings, each composed of seven catalytic beta subunits, are sandwiched by two outer rings, each composed of seven alpha subunits. The catalytic chamber with the active sites is on the inside of the barrel. Has a gated structure, the ends of the cylinder being occluded by the N-termini of the alpha-subunits. Is capped at one or both ends by the proteasome regulatory ATPase, PAN.

The protein localises to the cytoplasm. It catalyses the reaction Cleavage of peptide bonds with very broad specificity.. With respect to regulation, the formation of the proteasomal ATPase PAN-20S proteasome complex, via the docking of the C-termini of PAN into the intersubunit pockets in the alpha-rings, triggers opening of the gate for substrate entry. Interconversion between the open-gate and close-gate conformations leads to a dynamic regulation of the 20S proteasome proteolysis activity. Functionally, component of the proteasome core, a large protease complex with broad specificity involved in protein degradation. This chain is Proteasome subunit beta, found in Archaeoglobus profundus (strain DSM 5631 / JCM 9629 / NBRC 100127 / Av18).